A 330-amino-acid polypeptide reads, in one-letter code: Mas-related G-protein coupled receptor member X2 (330 aa).

Topologically, residues 1–33 (MDPTTPAWGTESTTMNGNDQALPLLCGKETLIL) are extracellular. Residues 34-54 (VLLILFIALVGLVGNAFVLWL) form a helical membrane-spanning segment. The Cytoplasmic portion of the chain corresponds to 55 to 63 (LGFRMRRNA). A helical membrane pass occupies residues 64-84 (FSVYVLSLAGADFLFLCFPMI). Over 85–96 (NCLEYLINFFHS) the chain is Extracellular. Residues 97 to 117 (ISINFPSFFTTVMTCAYLAGL) traverse the membrane as a helical segment. The Cytoplasmic segment spans residues 118–144 (SMLSAISTERCLSVLWPIWYRCRRPRH). Residues 145-165 (LSAVLCVLLWALSLLLSILEG) form a helical membrane-spanning segment. Residues 166-184 (KFCGLLFSDGDSGWCQTFD) lie on the Extracellular side of the membrane. A helical transmembrane segment spans residues 185–205 (FITAAWLMFLFVVLCGSSLAL). The Cytoplasmic portion of the chain corresponds to 206–228 (LVRILCGSQGLPLTRLYLTILLT). The helical transmembrane segment at 229–249 (VLIFLLCGLPFGIQWFLILWI) threads the bilayer. At 250–264 (WKNSDVLFCHIHPVS) the chain is on the extracellular side. Residues 265 to 285 (VVLSSFNSSANPIIYFFVGSF) traverse the membrane as a helical segment. The Cytoplasmic segment spans residues 286–330 (RKQWRLRQPVLKLALQRALQDTAEVDHSEGCFSQGTLEMSGSSLV).

The protein belongs to the G-protein coupled receptor 1 family. Mas subfamily.

The protein resides in the cell membrane. Functionally, mast cell-specific receptor for basic secretagogues, i.e. cationic amphiphilic drugs, as well as endo- or exogenous peptides, consisting of a basic head group and a hydrophobic core. Recognizes and binds small molecules containing a cyclized tetrahydroisoquinoline (THIQ), such as non-steroidal neuromuscular blocking drugs (NMBDs), including tubocurarine and atracurium. In response to these compounds, mediates pseudo-allergic reactions characterized by histamine release, inflammation and airway contraction. This Rhinopithecus bieti (Black snub-nosed monkey) protein is Mas-related G-protein coupled receptor member X2 (MRGPRX2).